Here is a 191-residue protein sequence, read N- to C-terminus: Transmembrane protein 17B (191 aa).

A run of 4 helical transmembrane segments spans residues 50-70, 83-103, 115-135, and 147-167; these read MSLY…VVML, FILI…LYLG, LAGF…FQLF, and GVHI…FVAL.

It belongs to the TMEM17 family. Part of the tectonic-like complex (also named B9 complex).

Its subcellular location is the cell projection. The protein localises to the cilium membrane. Transmembrane component of the tectonic-like complex, a complex localized at the transition zone of primary cilia and acting as a barrier that prevents diffusion of transmembrane proteins between the cilia and plasma membranes. Required for ciliogenesis and sonic hedgehog/SHH signaling. The polypeptide is Transmembrane protein 17B (Tmem17b) (Danio rerio (Zebrafish)).